The chain runs to 342 residues: MTDRYILAVESSCDETSVAILKNESTLLSNVIASQVESHKRFGGVVPEVASRHHVEVITTCFEDALQEAGISASDLSAVAVTYGPGLVGALLVGLAAAKAFAWANHLPLIPVNHMAGHLMAAREQKPLVYPLIALLVSGGHTELVYVPEPGDYHIIGETRDDAVGEAYDKVGRVMGLTYPAGREIDQLAHKGQDTYHFPRAMITEDHLEFSFSGLKSAFINLHHNAKQKGNELILEDLCASFQAAVLDILLAKTKKALSRYPAKMLVVAGGVAANQGLRDRLAQEITHIEVVIPKLRLCGDNAGMIALAAAIEYDKQHFANMSLNAKPSLAFDQFPDSFVIN.

2 residues coordinate Fe cation: H114 and H118. Substrate contacts are provided by residues 136 to 140 (LVSGG), D169, G182, D186, and N275. D301 contributes to the Fe cation binding site.

The protein belongs to the KAE1 / TsaD family. It depends on Fe(2+) as a cofactor.

It localises to the cytoplasm. It carries out the reaction L-threonylcarbamoyladenylate + adenosine(37) in tRNA = N(6)-L-threonylcarbamoyladenosine(37) in tRNA + AMP + H(+). Functionally, required for the formation of a threonylcarbamoyl group on adenosine at position 37 (t(6)A37) in tRNAs that read codons beginning with adenine. Is involved in the transfer of the threonylcarbamoyl moiety of threonylcarbamoyl-AMP (TC-AMP) to the N6 group of A37, together with TsaE and TsaB. TsaD likely plays a direct catalytic role in this reaction. This Streptococcus pyogenes serotype M4 (strain MGAS10750) protein is tRNA N6-adenosine threonylcarbamoyltransferase.